The primary structure comprises 539 residues: O-phosphoserine--tRNA(Cys) ligase (539 aa).

Residues 188–190, 233–235, 275–276, and asparagine 327 contribute to the substrate site; these read HMT, SAS, and YY.

It belongs to the class-II aminoacyl-tRNA synthetase family. O-phosphoseryl-tRNA(Cys) synthetase subfamily. In terms of assembly, homotetramer. Interacts with SepCysS.

The catalysed reaction is tRNA(Cys) + O-phospho-L-serine + ATP = O-phospho-L-seryl-tRNA(Cys) + AMP + diphosphate. Functionally, catalyzes the attachment of O-phosphoserine (Sep) to tRNA(Cys). The polypeptide is O-phosphoserine--tRNA(Cys) ligase (Methanococcoides burtonii (strain DSM 6242 / NBRC 107633 / OCM 468 / ACE-M)).